We begin with the raw amino-acid sequence, 111 residues long: MKTLLLALVVLAFVCLGSADQVGLGKEQIDRGRRQAIGPPFTRCSQCNRNRSPQCFIEDRCTPGDFTCYTVYKPNGNGGEDWVVKGCAKTCPTAGPGERVKCCYSPRCNKN.

Positions 1–19 are cleaved as a signal peptide; it reads MKTLLLALVVLAFVCLGSA. Residues 20–34 constitute a propeptide that is removed on maturation; that stretch reads DQVGLGKEQIDRGRR. Gln-35 is subject to Pyrrolidone carboxylic acid. 5 disulfide bridges follow: Cys-44/Cys-68, Cys-47/Cys-55, Cys-61/Cys-87, Cys-91/Cys-102, and Cys-103/Cys-108.

Belongs to the three-finger toxin family. Ancestral subfamily. Boigatoxin sub-subfamily. As to expression, expressed by the venom gland.

The protein localises to the secreted. Functionally, potent postsynaptic neurotoxin. Displays readily reversible competitive antagonism at the nicotinic acetylcholine receptor (nAChR). This chain is Toxin 3FTx-Tri2, found in Trimorphodon biscutatus (Western lyre snake).